Here is a 433-residue protein sequence, read N- to C-terminus: Gamma-glutamyl phosphate reductase (433 aa).

The protein belongs to the gamma-glutamyl phosphate reductase family.

It localises to the cytoplasm. The catalysed reaction is L-glutamate 5-semialdehyde + phosphate + NADP(+) = L-glutamyl 5-phosphate + NADPH + H(+). The protein operates within amino-acid biosynthesis; L-proline biosynthesis; L-glutamate 5-semialdehyde from L-glutamate: step 2/2. In terms of biological role, catalyzes the NADPH-dependent reduction of L-glutamate 5-phosphate into L-glutamate 5-semialdehyde and phosphate. The product spontaneously undergoes cyclization to form 1-pyrroline-5-carboxylate. This Cyanothece sp. (strain PCC 7425 / ATCC 29141) protein is Gamma-glutamyl phosphate reductase.